We begin with the raw amino-acid sequence, 70 residues long: Protein SlyX homolog (70 aa).

It belongs to the SlyX family.

This is Protein SlyX homolog from Shewanella putrefaciens (strain CN-32 / ATCC BAA-453).